Here is a 409-residue protein sequence, read N- to C-terminus: Probable tRNA pseudouridine synthase D (409 aa).

The active-site Nucleophile is D73. Positions G146 to A365 constitute a TRUD domain.

Belongs to the pseudouridine synthase TruD family.

The catalysed reaction is uridine(13) in tRNA = pseudouridine(13) in tRNA. Its function is as follows. Could be responsible for synthesis of pseudouridine from uracil-13 in transfer RNAs. In Thermoplasma volcanium (strain ATCC 51530 / DSM 4299 / JCM 9571 / NBRC 15438 / GSS1), this protein is Probable tRNA pseudouridine synthase D.